The sequence spans 685 residues: DNA ligase (685 aa).

NAD(+) contacts are provided by residues D47–D51, S96–L97, and E125. The active-site N6-AMP-lysine intermediate is the K127. 4 residues coordinate NAD(+): R148, E185, K304, and K328. Zn(2+)-binding residues include C422, C425, C440, and C446. Residues A605–A685 form the BRCT domain.

The protein belongs to the NAD-dependent DNA ligase family. LigA subfamily. Mg(2+) serves as cofactor. Mn(2+) is required as a cofactor.

It catalyses the reaction NAD(+) + (deoxyribonucleotide)n-3'-hydroxyl + 5'-phospho-(deoxyribonucleotide)m = (deoxyribonucleotide)n+m + AMP + beta-nicotinamide D-nucleotide.. DNA ligase that catalyzes the formation of phosphodiester linkages between 5'-phosphoryl and 3'-hydroxyl groups in double-stranded DNA using NAD as a coenzyme and as the energy source for the reaction. It is essential for DNA replication and repair of damaged DNA. The protein is DNA ligase of Shewanella baltica (strain OS223).